The primary structure comprises 229 residues: MNSMKFPLLDRTTQSSVISTTLNDLSNWSRLSSLWPLLYGTSCCFIEFASLIGSRFDFDRYGLVPRSSPRQADLILTAGTVTMKMAPSLVRLYEQMPEPKYVIAMGACTITGGMFSTDSYSTVRGVDKLIPVDVYLPGCPPKPEAILDAITKLRKKVSREIYEDKIGSQRENRYFTTNHKFHVPKSHVGRSTHIENYDQGLLSQSSSTPEIASENFFKYKSLVPNYDMN.

Positions 43, 44, 108, and 139 each coordinate [4Fe-4S] cluster.

This sequence belongs to the complex I 20 kDa subunit family. NDH is composed of at least 16 different subunits, 5 of which are encoded in the nucleus. [4Fe-4S] cluster is required as a cofactor.

It localises to the plastid. Its subcellular location is the chloroplast thylakoid membrane. The enzyme catalyses a plastoquinone + NADH + (n+1) H(+)(in) = a plastoquinol + NAD(+) + n H(+)(out). It carries out the reaction a plastoquinone + NADPH + (n+1) H(+)(in) = a plastoquinol + NADP(+) + n H(+)(out). NDH shuttles electrons from NAD(P)H:plastoquinone, via FMN and iron-sulfur (Fe-S) centers, to quinones in the photosynthetic chain and possibly in a chloroplast respiratory chain. The immediate electron acceptor for the enzyme in this species is believed to be plastoquinone. Couples the redox reaction to proton translocation, and thus conserves the redox energy in a proton gradient. The polypeptide is NAD(P)H-quinone oxidoreductase subunit K, chloroplastic (Piper cenocladum (Ant piper)).